A 123-amino-acid chain; its full sequence is Class I hydrophobin pri2 (123 aa).

The first 18 residues, 1–18 (MVAIKSLAILALPVMAMA), serve as a signal peptide directing secretion. 4 disulfide bridges follow: Cys-31–Cys-102, Cys-38–Cys-96, Cys-39–Cys-84, and Cys-103–Cys-116. Asn-33 and Asn-40 each carry an N-linked (GlcNAc...) asparagine glycan.

This sequence belongs to the fungal hydrophobin family. In terms of assembly, self-assembles to form functional amyloid fibrils called rodlets. Self-assembly into fibrillar rodlets occurs spontaneously at hydrophobic:hydrophilic interfaces and the rodlets further associate laterally to form amphipathic monolayers.

Its subcellular location is the secreted. The protein resides in the cell wall. Its function is as follows. Aerial growth, conidiation, and dispersal of filamentous fungi in the environment rely upon a capability of their secreting small amphipathic proteins called hydrophobins (HPBs) with low sequence identity. Class I can self-assemble into an outermost layer of rodlet bundles on aerial cell surfaces, conferring cellular hydrophobicity that supports fungal growth, development and dispersal; whereas Class II form highly ordered films at water-air interfaces through intermolecular interactions but contribute nothing to the rodlet structure. The sequence is that of Class I hydrophobin pri2 from Cyclocybe aegerita (Black poplar mushroom).